Here is a 162-residue protein sequence, read N- to C-terminus: Cyclic pyranopterin monophosphate synthase (162 aa).

Substrate-binding positions include 75–77 and 113–114; these read LCH and ME. The active site involves Asp-128.

Belongs to the MoaC family. In terms of assembly, homohexamer; trimer of dimers.

It carries out the reaction (8S)-3',8-cyclo-7,8-dihydroguanosine 5'-triphosphate = cyclic pyranopterin phosphate + diphosphate. It participates in cofactor biosynthesis; molybdopterin biosynthesis. Functionally, catalyzes the conversion of (8S)-3',8-cyclo-7,8-dihydroguanosine 5'-triphosphate to cyclic pyranopterin monophosphate (cPMP). The polypeptide is Cyclic pyranopterin monophosphate synthase (Burkholderia lata (strain ATCC 17760 / DSM 23089 / LMG 22485 / NCIMB 9086 / R18194 / 383)).